The chain runs to 1152 residues: Calcium-activated potassium channel subunit alpha-1 (1152 aa).

Residues 1–37 (MSSNIHANHLSLDASSSSSSSSSSSSSSSSSSSSVHE) form a disordered region. Topologically, residues 1-60 (MSSNIHANHLSLDASSSSSSSSSSSSSSSSSSSSVHEPKMDALIIPVTMEVPCDSRGQRM) are extracellular. Low complexity predominate over residues 15–34 (SSSSSSSSSSSSSSSSSSSS). The chain crosses the membrane as a helical span at residues 61-81 (WWAFLASSMVTFFGGLFIILL). Over 82–152 (WRTLKYLWTV…MISAQTLTGR (71 aa)) the chain is Cytoplasmic. 3 S-palmitoyl cysteine lipidation sites follow: C92, C93, and C95. Residues 153–173 (VLVVLVFALSIGALVIYFIDS) traverse the membrane as a helical segment. Residues 174 to 188 (SNPIESCQNFYKDFT) are Extracellular-facing. A helical transmembrane segment spans residues 189 to 209 (LQIDMAFNVFFLLYFGLRFIA). The Cytoplasmic segment spans residues 210–213 (ANDK). A helical transmembrane segment spans residues 214–234 (LWFWLEVNSVVDFFTVPPVFV). The Extracellular portion of the chain corresponds to 235–238 (SVYL). A helical; Voltage-sensor transmembrane segment spans residues 239–259 (NRSWLGLRFLRALRLIQFSEI). At 260-274 (LQFLNILKTSNSIKL) the chain is on the cytoplasmic side. A helical membrane pass occupies residues 275–295 (VNLLSIFISTWLTAAGFIHLV). Topologically, residues 296–309 (ENSGDPWENFQNNQ) are extracellular. The pore-forming intramembrane region spans 310–332 (ALTYWECVYLLMVTMSTVGYGDV). The short motif at 326–329 (TVGY) is the Selectivity for potassium element. Residues 333-341 (YAKTTLGRL) lie on the Extracellular side of the membrane. The helical transmembrane segment at 342-362 (FMVFFILGGLAMFASYVPEII) threads the bilayer. At 363-1152 (ELIGNRKKYG…KQKYVQEERL (790 aa)) the chain is on the cytoplasmic side. Positions 381 to 523 (RKHIVVCGHI…WNWKEGDDAI (143 aa)) constitute an RCK N-terminal 1 domain. E413, Q436, and E438 together coordinate Mg(2+). A segment S7 region spans residues 530 to 550 (LGFIAQSCLAQGLSTMLANLF). The segment S8 stretch occupies residues 587–607 (LSFPTVCELCFVKLKLLMIAI). The segment at 651–655 (CKACH) is heme-binding motif. Residues 675 to 703 (EQPSTLSPKKKQRNGGMRNSPSSSPKLMR) form a disordered region. T679 carries the post-translational modification Phosphothreonine. S681, S694, and S698 each carry phosphoserine. A segment S9 region spans residues 753–773 (VLSGHVVVCIFGDVSSALIGL). The RCK N-terminal 2 domain occupies 755-899 (SGHVVVCIFG…MDRSSPDNSP (145 aa)). T886 bears the Phosphothreonine mark. Phosphoserine occurs at positions 894 and 898. Positions 919–941 (TELVNDTNVQFLDQDDDDDPDTE) match the Calcium bowl motif. The Ca(2+) site is built by Q928, D931, D934, and D936. A segment S10 region spans residues 948–968 (FACGTAFAVSVLDSLMSATYF). The span at 1102–1127 (RASLSHSSHSSQSSSKKSSSVHSIPS) shows a compositional bias: low complexity. Residues 1102–1152 (RASLSHSSHSSQSSSKKSSSVHSIPSTANRQNRPKSRESRDKQKYVQEERL) are disordered. Positions 1136-1152 (KSRESRDKQKYVQEERL) are enriched in basic and acidic residues. Residues S1137 and S1140 each carry the phosphoserine modification.

Belongs to the potassium channel family. Calcium-activated (TC 1.A.1.3) subfamily. KCa1.1/KCNMA1 sub-subfamily. In terms of assembly, homotetramer; which constitutes the calcium-activated potassium channel. Interacts with beta subunits KCNMB1, KCNMB2, KCNMB3 and KCNMB4. Interacts with gamma subunits LRRC26, LRRC38, LRRC52 and LRRC55. Beta and gamma subunits are accessory, and modulate its activity. Interacts with RAB11B. Phosphorylated. Phosphorylation by kinases such as PKA and/or PKG. In smooth muscles, phosphorylation affects its activity. Post-translationally, palmitoylation by ZDHHC22 and ZDHHC23 within the intracellular linker between the S0 and S1 transmembrane domains regulates localization to the plasma membrane. Depalmitoylated by LYPLA1 and LYPLAL1, leading to retard exit from the trans-Golgi network.

The protein localises to the cell membrane. The catalysed reaction is K(+)(in) = K(+)(out). With respect to regulation, ethanol and carbon monoxide-bound heme increase channel activation. Heme inhibits channel activation. Functionally, potassium channel activated by both membrane depolarization or increase in cytosolic Ca(2+) that mediates export of K(+). It is also activated by the concentration of cytosolic Mg(2+). Its activation dampens the excitatory events that elevate the cytosolic Ca(2+) concentration and/or depolarize the cell membrane. It therefore contributes to repolarization of the membrane potential. Plays a key role in controlling excitability in a number of systems, such as regulation of the contraction of smooth muscle, the tuning of hair cells in the cochlea, regulation of transmitter release, and innate immunity. In smooth muscles, its activation by high level of Ca(2+), caused by ryanodine receptors in the sarcoplasmic reticulum, regulates the membrane potential. In cochlea cells, its number and kinetic properties partly determine the characteristic frequency of each hair cell and thereby helps to establish a tonotopic map. Kinetics of KCNMA1 channels are determined by alternative splicing, phosphorylation status and its combination with modulating beta subunits. Highly sensitive to both iberiotoxin (IbTx) and charybdotoxin (CTX). This chain is Calcium-activated potassium channel subunit alpha-1 (KCNMA1), found in Sus scrofa (Pig).